The chain runs to 295 residues: Protoheme IX farnesyltransferase (295 aa).

9 consecutive transmembrane segments (helical) span residues Val8–Ala28, Tyr35–Phe55, Val74–Ile94, Pro106–Leu125, Val132–Ala152, Leu162–Phe182, Ile208–Ala228, Leu233–Ala253, and Phe264–Val284.

Belongs to the UbiA prenyltransferase family. Protoheme IX farnesyltransferase subfamily.

It localises to the cell inner membrane. It catalyses the reaction heme b + (2E,6E)-farnesyl diphosphate + H2O = Fe(II)-heme o + diphosphate. Its pathway is porphyrin-containing compound metabolism; heme O biosynthesis; heme O from protoheme: step 1/1. Its function is as follows. Converts heme B (protoheme IX) to heme O by substitution of the vinyl group on carbon 2 of heme B porphyrin ring with a hydroxyethyl farnesyl side group. The sequence is that of Protoheme IX farnesyltransferase from Cronobacter sakazakii (strain ATCC BAA-894) (Enterobacter sakazakii).